A 64-amino-acid polypeptide reads, in one-letter code: MSETITVNCPTCGKTVVWGEVSPFRPFCSKRCQLIDLGEWAAEEKRIPSSGDLSESDDWSEEQK.

The Zn(2+) site is built by Cys9, Cys12, Cys28, and Cys32. A disordered region spans residues 45–64 (KRIPSSGDLSESDDWSEEQK). The span at 54 to 64 (SESDDWSEEQK) shows a compositional bias: acidic residues.

This sequence belongs to the DNA gyrase inhibitor YacG family. In terms of assembly, interacts with GyrB. Requires Zn(2+) as cofactor.

In terms of biological role, inhibits all the catalytic activities of DNA gyrase by preventing its interaction with DNA. Acts by binding directly to the C-terminal domain of GyrB, which probably disrupts DNA binding by the gyrase. This Citrobacter koseri (strain ATCC BAA-895 / CDC 4225-83 / SGSC4696) protein is DNA gyrase inhibitor YacG.